Reading from the N-terminus, the 112-residue chain is Nucleoid-associated protein BCI_0116 (112 aa).

The protein belongs to the YbaB/EbfC family. In terms of assembly, homodimer.

It is found in the cytoplasm. It localises to the nucleoid. Binds to DNA and alters its conformation. May be involved in regulation of gene expression, nucleoid organization and DNA protection. The chain is Nucleoid-associated protein BCI_0116 from Baumannia cicadellinicola subsp. Homalodisca coagulata.